A 498-amino-acid chain; its full sequence is Lipase 3 (498 aa).

The cysteines at positions 60 and 91 are disulfide-linked. An N-linked (GlcNAc...) asparagine glycan is attached at N193. The active-site Acyl-ester intermediate is S200. A glycan (N-linked (GlcNAc...) asparagine) is linked at N384. H409 functions as the Charge relay system in the catalytic mechanism. A glycan (N-linked (GlcNAc...) asparagine) is linked at N418.

The protein belongs to the type-B carboxylesterase/lipase family.

The catalysed reaction is a triacylglycerol + H2O = a diacylglycerol + a fatty acid + H(+). This chain is Lipase 3 (LIP3), found in Yarrowia lipolytica (strain CLIB 122 / E 150) (Yeast).